Consider the following 1185-residue polypeptide: 205 kDa microtubule-associated protein (1185 aa).

Residues 146 to 159 show a composition bias toward low complexity; sequence EPNQLPEQLQQQQQ. The disordered stretch occupies residues 146-196; that stretch reads EPNQLPEQLQQQQQIESQGVHEDPRQEDEDEHSSVATTYGTSSLSENNSSP. Polar residues predominate over residues 179–196; it reads SVATTYGTSSLSENNSSP. Serine 354 and serine 448 each carry phosphoserine. Position 450 is a phosphotyrosine (tyrosine 450). 3 positions are modified to phosphoserine: serine 709, serine 710, and serine 712. The residue at position 721 (threonine 721) is a Phosphothreonine. Residue serine 728 is modified to Phosphoserine. The interval 745–977 is microtubule-binding; that stretch reads TAADGQSISQ…ASTKVRPAAT (233 aa). A compositionally biased stretch (low complexity) spans 856 to 866; the sequence is SIATKTSTTSS. Disordered stretches follow at residues 856–1035 and 1054–1114; these read SIAT…TSTA and SASL…SSPA. Polar residues-rich tracts occupy residues 867-881 and 908-936; these read LTGN…NVGS and TITN…STNA. Position 874 is a phosphoserine (serine 874). The segment covering 940–952 has biased composition (low complexity); sequence ATSGTGSVASSTA. Residues 989–999 are compositionally biased toward polar residues; that stretch reads PRSTISSTTTV. Positions 1003 to 1015 are enriched in low complexity; that stretch reads PSTSTPSFSTRSP. Composition is skewed to polar residues over residues 1016 to 1026 and 1054 to 1066; these read NKQQSNGLGKN and SASL…STSR. 2 positions are modified to phosphoserine: serine 1075 and serine 1086. The segment covering 1100 to 1111 has biased composition (polar residues); that stretch reads LTPQSKDGTAKS. Serine 1121 carries the post-translational modification Phosphoserine.

It is found in the cytoplasm. Its subcellular location is the cytoskeleton. The protein localises to the spindle. Functionally, may play an important role in the regulation of microtubule assembly and interaction. In Drosophila melanogaster (Fruit fly), this protein is 205 kDa microtubule-associated protein (Map205).